The following is a 284-amino-acid chain: 3-methyl-2-oxobutanoate hydroxymethyltransferase (284 aa).

Residues Asp-52 and Asp-91 each coordinate Mg(2+). 3-methyl-2-oxobutanoate is bound by residues 52–53 (DS), Asp-91, and Lys-121. Glu-123 contributes to the Mg(2+) binding site. Glu-191 functions as the Proton acceptor in the catalytic mechanism.

This sequence belongs to the PanB family. Homodecamer; pentamer of dimers. Mg(2+) is required as a cofactor.

The protein resides in the cytoplasm. The catalysed reaction is 3-methyl-2-oxobutanoate + (6R)-5,10-methylene-5,6,7,8-tetrahydrofolate + H2O = 2-dehydropantoate + (6S)-5,6,7,8-tetrahydrofolate. Its pathway is cofactor biosynthesis; (R)-pantothenate biosynthesis; (R)-pantoate from 3-methyl-2-oxobutanoate: step 1/2. Functionally, catalyzes the reversible reaction in which hydroxymethyl group from 5,10-methylenetetrahydrofolate is transferred onto alpha-ketoisovalerate to form ketopantoate. This Deinococcus radiodurans (strain ATCC 13939 / DSM 20539 / JCM 16871 / CCUG 27074 / LMG 4051 / NBRC 15346 / NCIMB 9279 / VKM B-1422 / R1) protein is 3-methyl-2-oxobutanoate hydroxymethyltransferase.